The primary structure comprises 435 residues: RuBisCO large subunit-binding protein subunit beta-1 (435 aa).

This sequence belongs to the chaperonin (HSP60) family. As to quaternary structure, oligomer of probably six alpha and six beta subunits.

Its subcellular location is the plastid. It is found in the chloroplast. In terms of biological role, this protein binds RuBisCO small and large subunits and is implicated in the assembly of the enzyme oligomer. This is RuBisCO large subunit-binding protein subunit beta-1 from Chlamydomonas reinhardtii (Chlamydomonas smithii).